The chain runs to 129 residues: Small ribosomal subunit protein uS11 (129 aa).

This sequence belongs to the universal ribosomal protein uS11 family. Part of the 30S ribosomal subunit. Interacts with proteins S7 and S18. Binds to IF-3.

Its function is as follows. Located on the platform of the 30S subunit, it bridges several disparate RNA helices of the 16S rRNA. Forms part of the Shine-Dalgarno cleft in the 70S ribosome. This is Small ribosomal subunit protein uS11 from Buchnera aphidicola subsp. Baizongia pistaciae (strain Bp).